The following is a 906-amino-acid chain: Glutamate receptor 1 (906 aa).

A signal peptide spans 1-18; the sequence is MQHIFAFFCTGFLGAVVG. Topologically, residues 19-536 are extracellular; sequence ANFPNNIQIG…GVFSFLDPLA (518 aa). 6 N-linked (GlcNAc...) asparagine glycosylation sites follow: Asn-63, Asn-249, Asn-257, Asn-363, Asn-401, and Asn-406. A disulfide bond links Cys-75 and Cys-323. L-glutamate-binding residues include Pro-492, Thr-494, and Arg-499. The chain crosses the membrane as a helical span at residues 537–557; that stretch reads YEIWMCIVFAYIGVSVVLFLV. Topologically, residues 558 to 584 are cytoplasmic; it reads SRFSPYEWHSEEFEEGRDQTTSDQSNE. The segment at residues 585–600 is an intramembrane region (helical; Pore-forming); it reads FGIFNSLWFSLGAFMQ. Residues 601-603 lie within the membrane without spanning it; the sequence is QGC. Cys-603 is lipidated: S-palmitoyl cysteine. Residues 604 to 609 are Cytoplasmic-facing; that stretch reads DISPRS. Residues 610 to 630 traverse the membrane as a helical segment; that stretch reads LSGRIVGGVWWFFTLIIISSY. Topologically, residues 631-805 are extracellular; it reads TANLAAFLTV…DKTSALSLSN (175 aa). Ser-645 is subject to Phosphoserine. Residues Ser-668 and Thr-669 each contribute to the L-glutamate site. Position 710 is a phosphoserine (Ser-710). Glu-719 serves as a coordination point for L-glutamate. Cys-732 and Cys-787 are disulfide-bonded. The helical transmembrane segment at 806-826 threads the bilayer; it reads VAGVFYILIGGLGLAMLVALI. The Cytoplasmic portion of the chain corresponds to 827-906; that stretch reads EFCYKSRSES…SGMPLGATGL (80 aa). Cys-829 carries S-palmitoyl cysteine lipidation. Ser-849 and Ser-863 each carry phosphoserine. A disordered region spans residues 861-880; sequence RNSGAGASSGGSGENGRVVS. Residues 903–906 carry the PDZ-binding motif; sequence ATGL.

The protein belongs to the glutamate-gated ion channel (TC 1.A.10.1) family. GRIA1 subfamily. As to quaternary structure, homotetramer or heterotetramer of pore-forming glutamate receptor subunits; heteromeric assembly can be the result of both receptor subtype and flip or flop form and according the composition, one partner can be dominant with respect to the fast desensitizing current component, whereas the other can determine the steady-state component. Tetramers may be formed by the dimerization of dimers. Found in a complex with GRIA2, GRIA3, GRIA4, CNIH2, CNIH3, CACNG2, CACNG3, CACNG4, CACNG5, CACNG7 and CACNG8. Interacts with HIP1 and RASGRF2. Interacts with SYNDIG1 and GRIA2. Interacts with DLG1 (via C-terminus). Interacts with LRFN1. Interacts with PRKG2. Interacts with CNIH2 and CACNG2. Interacts with CACNG5; this interaction modulates the gating. Interacts (via C-terminus) with PDLIM4 (via LIM domain); this interaction as well as the interaction of PDLIM4 with alpha-actinin is required for their colocalization in early endosomes. Interacts with SNX27 (via PDZ domain); the interaction is required for recycling to the plasma membrane when endocytosed and prevent degradation in lysosomes. Interacts (via PDZ-binding motif) with SHANK3 (via PDZ domain). Interacts with CACNG3; associates GRIA1 with the adapter protein complex 4 (AP-4) to target GRIA1 to the somatodendritic compartment of neurons. Interacts with CACNG2; this interaction mediates traffick to the plasma membrane and modulation of desensitization. Interacts with CNIH2 and CNIH3; this interaction promotes expression at the plasma membrane and extensively modulates their gating properties by slowing deactivation and desensitization kinetics. Found in a complex with GRIA2, GRIA3, GRIA4, DLG4, CACNG8 and CNIH2. Post-translationally, palmitoylated. Depalmitoylated by CPT1C and upon L-glutamate stimulation. ZDHHC3/GODZ specifically palmitoylates Cys-603, which leads to Golgi retention and decreased cell surface expression. In contrast, Cys-829 palmitoylation does not affect cell surface expression but regulates stimulation-dependent endocytosis. Phosphorylated at Ser-645. Phosphorylated at Ser-710 by PKC. Phosphorylated at Ser-849 by PKC, PKA and CAMK2. Phosphorylated at Ser-863 by PKC, PKA and PRKG2. Phosphorylation of Ser-863 is reduced by induction of long-term depression and increased by induction of long-term potentiation. In terms of tissue distribution, widely expressed in brain.

It localises to the cell membrane. The protein localises to the endoplasmic reticulum membrane. The protein resides in the postsynaptic cell membrane. Its subcellular location is the postsynaptic density membrane. It is found in the cell projection. It localises to the dendrite. The protein localises to the dendritic spine. The protein resides in the early endosome membrane. Its subcellular location is the recycling endosome membrane. It is found in the presynapse. It localises to the synapse. It catalyses the reaction Ca(2+)(in) = Ca(2+)(out). The enzyme catalyses Na(+)(in) = Na(+)(out). It carries out the reaction Mg(2+)(in) = Mg(2+)(out). The catalysed reaction is Li(+)(in) = Li(+)(out). It catalyses the reaction K(+)(in) = K(+)(out). The enzyme catalyses Sr(2+)(in) = Sr(2+)(out). In terms of biological role, ionotropic glutamate receptor that functions as a ligand-gated cation channel, gated by L-glutamate and glutamatergic agonists such as alpha-amino-3-hydroxy-5-methyl-4-isoxazolepropionic acid (AMPA), quisqualic acid, and kainic acid. L-glutamate acts as an excitatory neurotransmitter at many synapses in the central nervous system. Binding of the excitatory neurotransmitter L-glutamate induces a conformation change, leading to the opening of the cation channel, and thereby converts the chemical signal to an electrical impulse upon entry of monovalent and divalent cations such as sodium and calcium. The receptor then desensitizes rapidly and enters in a transient inactive state, characterized by the presence of bound agonist. In the presence of CACNG2 or CACNG4 or CACNG7 or CACNG8, shows resensitization which is characterized by a delayed accumulation of current flux upon continued application of L-glutamate. Resensitization is blocked by CNIH2 through interaction with CACNG8 in the CACNG8-containing AMPA receptors complex. Calcium (Ca(2+)) permeability depends on subunits composition and, heteromeric channels containing edited GRIA2 subunit are calcium-impermeable. Also permeable to other divalents cations such as strontium(2+) and magnesium(2+) and monovalent cations such as potassium(1+) and lithium(1+). The polypeptide is Glutamate receptor 1 (Homo sapiens (Human)).